We begin with the raw amino-acid sequence, 421 residues long: Elsinochrome C biosynthesis regulatory protein elcR (421 aa).

Positions 1 to 16 (MATQLPSPTATTSHSG) are enriched in polar residues. Positions 1–20 (MATQLPSPTATTSHSGNEPR) are disordered. Positions 27–54 (CNNCSAQKIRCGKQRPACARCVNKKLQC) form a DNA-binding region, zn(2)-C6 fungal-type.

The protein resides in the nucleus. In terms of biological role, transcription regulator of the gene cluster that mediates the biosynthesis of elsinochrome C, a perelyenequinone phytotoxin structurally similar to cercosporin. This Phaeosphaeria nodorum (strain SN15 / ATCC MYA-4574 / FGSC 10173) (Glume blotch fungus) protein is Elsinochrome C biosynthesis regulatory protein elcR.